The sequence spans 357 residues: S-adenosyl-L-methionine:benzoic acid/salicylic acid carboxyl methyltransferase 2 (357 aa).

Tyrosine 18 is a binding site for S-adenosyl-L-homocysteine. Glutamine 25 serves as a coordination point for benzoate. Residues cysteine 59, asparagine 64, aspartate 96, leucine 97, serine 135, and phenylalanine 136 each coordinate S-adenosyl-L-homocysteine. A benzoate-binding site is contributed by tryptophan 157. Mg(2+) is bound by residues asparagine 168, aspartate 254, phenylalanine 256, and asparagine 257. A benzoate-binding site is contributed by glutamine 260.

It belongs to the methyltransferase superfamily. Type-7 methyltransferase family. In terms of tissue distribution, predominantly expressed in petal limbs and tubes of corollas.

It carries out the reaction benzoate + S-adenosyl-L-methionine = methyl benzoate + S-adenosyl-L-homocysteine. The enzyme catalyses salicylate + S-adenosyl-L-methionine = methyl salicylate + S-adenosyl-L-homocysteine. It functions in the pathway aromatic compound metabolism. In terms of biological role, converts benzoic acid into the volatile ester methyl benzoates. This scent, mostly produced in a rhythmical, diurnal manner, attracts the pollinators. The polypeptide is S-adenosyl-L-methionine:benzoic acid/salicylic acid carboxyl methyltransferase 2 (Petunia hybrida (Petunia)).